The primary structure comprises 309 residues: Homoserine O-succinyltransferase (309 aa).

Cys142 serves as the catalytic Acyl-thioester intermediate. The substrate site is built by Lys163 and Ser192. Catalysis depends on His235, which acts as the Proton acceptor. Glu237 is a catalytic residue. A substrate-binding site is contributed by Arg249.

The protein belongs to the MetA family.

The protein localises to the cytoplasm. The catalysed reaction is L-homoserine + succinyl-CoA = O-succinyl-L-homoserine + CoA. Its pathway is amino-acid biosynthesis; L-methionine biosynthesis via de novo pathway; O-succinyl-L-homoserine from L-homoserine: step 1/1. In terms of biological role, transfers a succinyl group from succinyl-CoA to L-homoserine, forming succinyl-L-homoserine. This is Homoserine O-succinyltransferase from Yersinia enterocolitica serotype O:8 / biotype 1B (strain NCTC 13174 / 8081).